Here is a 673-residue protein sequence, read N- to C-terminus: Pesticin receptor (673 aa).

Positions 1–22 are cleaved as a signal peptide; it reads MKMTRLYPLALGGLLLPAIANA. Residues 30 to 37 carry the TonB box motif; the sequence is STLVVTAS. The 115-residue stretch at 41-155 folds into the TBDR plug domain; sequence SRSASANNVS…QGGIINIVTQ (115 aa). The TBDR beta-barrel domain maps to 160–672; that stretch reads TPRGYIEGGV…TVGINTRIDF (513 aa). Residues 657-673 carry the TonB C-terminal box motif; the sequence is QVNMGRTVGINTRIDFF.

Belongs to the TonB-dependent receptor family.

The protein resides in the cell outer membrane. Receptor for the bacteriocin pesticin and for the siderophore yersiniabactin. This is Pesticin receptor (fyuA) from Yersinia pestis.